Reading from the N-terminus, the 193-residue chain is Potassium-transporting ATPase KdpC subunit (193 aa).

The chain crosses the membrane as a helical span at residues 7–27 (PLVVLFVVLTAVTGLAYPAVM).

It belongs to the KdpC family. As to quaternary structure, the system is composed of three essential subunits: KdpA, KdpB and KdpC.

The protein resides in the cell inner membrane. Functionally, part of the high-affinity ATP-driven potassium transport (or Kdp) system, which catalyzes the hydrolysis of ATP coupled with the electrogenic transport of potassium into the cytoplasm. This subunit acts as a catalytic chaperone that increases the ATP-binding affinity of the ATP-hydrolyzing subunit KdpB by the formation of a transient KdpB/KdpC/ATP ternary complex. The chain is Potassium-transporting ATPase KdpC subunit from Burkholderia orbicola (strain MC0-3).